The sequence spans 912 residues: Intercellular adhesion molecule 5 (912 aa).

A signal peptide spans 1-29 (MPGPSPGLRALLGFWVALGLGILRLSAVA). The Extracellular portion of the chain corresponds to 30–826 (QEPFWADLQP…RITVRVAGPW (797 aa)). Ig-like C2-type domains lie at 47–127 (GGSL…PLPP), 132–232 (GENF…RLLA), 239–324 (DSQS…LLTL), 332–395 (GKLV…NGSA), 403–481 (PRLD…VTLT), 486–561 (PALD…VAVT), 566–645 (PSFE…NPLG), 659–734 (PQMD…TVGV), and 738–819 (PVVA…RRIT). An N-linked (GlcNAc...) (high mannose) asparagine glycan is attached at N53. Cystine bridges form between C54–C97 and C58–C101. The N-linked (GlcNAc...) asparagine glycan is linked to N134. Cysteines 139 and 195 form a disulfide. Phosphothreonine occurs at positions 179 and 181. N-linked (GlcNAc...) asparagine glycans are attached at residues N192 and N211. C246 and C297 are disulfide-bonded. N-linked (GlcNAc...) asparagine glycans are attached at residues N311, N366, and N392. The cysteines at positions 339 and 378 are disulfide-linked. Cystine bridges form between C410–C465, C493–C546, and C573–C638. N-linked (GlcNAc...) asparagine glycosylation is found at N576 and N639. C666 and C717 are oxidised to a cystine. Residues 678 to 708 (AAGPACARGRPSPRVRCSREGAPRPARPRVS) form a disordered region. N756, N787, and N788 each carry an N-linked (GlcNAc...) asparagine glycan. The cysteines at positions 761 and 806 are disulfide-linked. The chain crosses the membrane as a helical span at residues 827-847 (LWIAVGGAVGGAVLLAAGAGL). Residues 848 to 912 (AFYVQSTACK…EVFAIQLTSA (65 aa)) lie on the Cytoplasmic side of the membrane. The interval 880–902 (GGAGSGAEGGPEAEDSAESPAGG) is disordered.

This sequence belongs to the immunoglobulin superfamily. ICAM family. Post-translationally, glycosylation at Asn-53 is critical for functional folding. Expressed on neurons in the most rostral segment of the mammalian brain, the telencephalon.

The protein resides in the membrane. ICAM proteins are ligands for the leukocyte adhesion protein LFA-1 (integrin alpha-L/beta-2). The polypeptide is Intercellular adhesion molecule 5 (ICAM5) (Oryctolagus cuniculus (Rabbit)).